A 301-amino-acid chain; its full sequence is Probable alpha-L-glutamate ligase (301 aa).

The ATP-grasp domain maps to 104 to 287; it reads LQLLSRKGVG…VAGRIVSFIE (184 aa). ATP-binding positions include lysine 141, 178–179, aspartate 187, and 211–213; these read EF and RSN. Mg(2+) contacts are provided by aspartate 248, glutamate 260, and asparagine 262. Positions 248, 260, and 262 each coordinate Mn(2+).

It belongs to the RimK family. Requires Mg(2+) as cofactor. Mn(2+) is required as a cofactor.

This Thioalkalivibrio sulfidiphilus (strain HL-EbGR7) protein is Probable alpha-L-glutamate ligase.